Here is a 192-residue protein sequence, read N- to C-terminus: dTTP/UTP pyrophosphatase (192 aa).

D68 serves as the catalytic Proton acceptor.

This sequence belongs to the Maf family. YhdE subfamily. Requires a divalent metal cation as cofactor.

Its subcellular location is the cytoplasm. It catalyses the reaction dTTP + H2O = dTMP + diphosphate + H(+). It carries out the reaction UTP + H2O = UMP + diphosphate + H(+). Nucleoside triphosphate pyrophosphatase that hydrolyzes dTTP and UTP. May have a dual role in cell division arrest and in preventing the incorporation of modified nucleotides into cellular nucleic acids. The sequence is that of dTTP/UTP pyrophosphatase from Cereibacter sphaeroides (strain ATCC 17023 / DSM 158 / JCM 6121 / CCUG 31486 / LMG 2827 / NBRC 12203 / NCIMB 8253 / ATH 2.4.1.) (Rhodobacter sphaeroides).